A 595-amino-acid chain; its full sequence is Epsin-2 (595 aa).

Residues Arg-8, Lys-11, Arg-25, Asn-30, Arg-63, and His-73 each contribute to the a 1,2-diacyl-sn-glycero-3-phospho-(1D-myo-inositol-4,5-bisphosphate) site. The ENTH domain maps to 12–144 (NIVNNYSEAE…KDEERLKVER (133 aa)). Residues 164–183 (NQITFGRGSSQPNLSTSYSE) show a composition bias toward polar residues. 4 disordered regions span residues 164 to 254 (NQIT…RLRR), 267 to 289 (SRRDTVKVPKKKEAKACCKPGSH), 305 to 396 (SGPV…KPSS), and 423 to 469 (TSKK…PESF). Arg-170 bears the Omega-N-methylarginine mark. Ser-173, Ser-192, and Ser-195 each carry phosphoserine. Polar residues-rich tracts occupy residues 197 to 216 (HGSTSPRVSSELEQARPQTS) and 235 to 245 (EQSSESVQTAR). UIM domains follow at residues 218-237 (EEELQLQLALAMSREVAEQS) and 255-274 (GDDLRLQMALEESRRDTVKV). A compositionally biased stretch (polar residues) spans 306 to 337 (GPVTQKTEPWSAGASANQTNPWGGTVAPSNIT). Tandem repeats lie at residues 313-315 (EPW), 325-327 (NPW), 338-340 (DPW), and 352-354 (DPW). The tract at residues 313 to 389 (EPWSAGASAN…SNAGKTTDAW (77 aa)) is 6 X 3 AA repeats of [DE]-P-W. Over residues 358–367 (TTASTQSVPK) the composition is skewed to polar residues. The stretch at 370 to 372 (DPW) is repeat 5. Residues 374-384 (ASQQPASNAGK) are compositionally biased toward polar residues. Repeat unit 6 spans residues 387–389 (DAW). The residue at position 443 (Ser-443) is a Phosphoserine. Residues 449–460 (SQSLTSASSKPS) are compositionally biased toward low complexity. A Phosphothreonine modification is found at Thr-465. Tandem repeats lie at residues 494–496 (NPF) and 508–510 (NPF). Positions 494-593 (NPFLAPGAAA…AQSTGTTNPF (100 aa)) are 3 X 3 AA repeats of N-P-F. Ser-526 is subject to Phosphoserine. Residues 591–593 (NPF) form repeat 3.

The protein belongs to the epsin family. As to quaternary structure, binds EPS15, AP-2 and clathrin. Interacts with UBQLN2. Interacts with ITSN1. In terms of processing, ubiquitinated.

The protein localises to the cytoplasm. Its function is as follows. Plays a role in the formation of clathrin-coated invaginations and endocytosis. The sequence is that of Epsin-2 (Epn2) from Mus musculus (Mouse).